The sequence spans 71 residues: Exodeoxyribonuclease 7 small subunit (71 aa).

This sequence belongs to the XseB family. In terms of assembly, heterooligomer composed of large and small subunits.

The protein localises to the cytoplasm. It carries out the reaction Exonucleolytic cleavage in either 5'- to 3'- or 3'- to 5'-direction to yield nucleoside 5'-phosphates.. Bidirectionally degrades single-stranded DNA into large acid-insoluble oligonucleotides, which are then degraded further into small acid-soluble oligonucleotides. This chain is Exodeoxyribonuclease 7 small subunit, found in Streptococcus suis (strain 98HAH33).